Here is a 122-residue protein sequence, read N- to C-terminus: UPF0102 protein VIBHAR_00890 (122 aa).

This sequence belongs to the UPF0102 family.

This is UPF0102 protein VIBHAR_00890 from Vibrio campbellii (strain ATCC BAA-1116).